A 309-amino-acid chain; its full sequence is Ecotin-like protein 3 (309 aa).

Residues 140 to 309 (QQELEAPAVS…KSGRDSRRNS (170 aa)) are disordered. A compositionally biased stretch (basic and acidic residues) spans 156 to 167 (VRERQNNPEGHA). Positions 168–180 (HPVVVHSVESPEV) are enriched in low complexity. Over residues 181–190 (SGHKDGDQPM) the composition is skewed to basic and acidic residues. Low complexity predominate over residues 196 to 205 (LKQSCSNSSR). Positions 209–221 (HSASGSSPKNTPL) are enriched in polar residues. Residues 261–279 (SDSTSSRKDDQDSGYEKKV) are compositionally biased toward basic and acidic residues. The span at 290-299 (SSPKRSASPK) shows a compositional bias: low complexity.

This sequence belongs to the protease inhibitor I11 (ecotin) family.

The polypeptide is Ecotin-like protein 3 (Leishmania braziliensis).